We begin with the raw amino-acid sequence, 693 residues long: Subtilisin-like protease SBT4.10 (693 aa).

Positions 1-25 are cleaved as a signal peptide; that stretch reads MAKLREASFCALACVLVLFLSFVSA. Positions 26-113 are cleaved as a propeptide — activation peptide; the sequence is DTYNRQDKQV…VFPSKKYKLH (88 aa). The Inhibitor I9 domain maps to 35–113; it reads VYVVYMGSLP…VFPSKKYKLH (79 aa). The Peptidase S8 domain occupies 117–536; the sequence is SWDFMGLKEG…SGHIDPIAAI (420 aa). Catalysis depends on Asp145, which acts as the Charge relay system. N-linked (GlcNAc...) asparagine glycosylation is present at Asn176. His200 acts as the Charge relay system in catalysis. 5 N-linked (GlcNAc...) asparagine glycosylation sites follow: Asn215, Asn223, Asn368, Asn413, and Asn467. The region spanning 354-396 is the PA domain; that stretch reads QYPLVYETSVEKCNNESLTTLALSFLTLTPQSNEQIISMFHTL. The active-site Charge relay system is Ser475. Residues Asn559, Asn603, and Asn613 are each glycosylated (N-linked (GlcNAc...) asparagine).

Belongs to the peptidase S8 family. In terms of processing, the C-terminal propeptide is autocleaved.

Its subcellular location is the secreted. This chain is Subtilisin-like protease SBT4.10, found in Arabidopsis thaliana (Mouse-ear cress).